A 129-amino-acid polypeptide reads, in one-letter code: NADPH-dependent 7-cyano-7-deazaguanine reductase (129 aa).

Cysteine 34 functions as the Thioimide intermediate in the catalytic mechanism. The active-site Proton donor is the aspartate 41. Substrate contacts are provided by residues 56–58 (VEL) and 75–76 (HE).

It belongs to the GTP cyclohydrolase I family. QueF type 1 subfamily.

The protein resides in the cytoplasm. The enzyme catalyses 7-aminomethyl-7-carbaguanine + 2 NADP(+) = 7-cyano-7-deazaguanine + 2 NADPH + 3 H(+). It functions in the pathway tRNA modification; tRNA-queuosine biosynthesis. Functionally, catalyzes the NADPH-dependent reduction of 7-cyano-7-deazaguanine (preQ0) to 7-aminomethyl-7-deazaguanine (preQ1). The chain is NADPH-dependent 7-cyano-7-deazaguanine reductase from Thioalkalivibrio sulfidiphilus (strain HL-EbGR7).